The following is a 315-amino-acid chain: Small ribosomal subunit protein uS2 (315 aa).

The tract at residues 241–315 (AQHGEERRPG…QPAPGSDANR (75 aa)) is disordered. Residues 243 to 288 (HGEERRPGEEDRDAASERGQKDRRDRRDRRGGGRDRERREPREDRA) show a composition bias toward basic and acidic residues.

This sequence belongs to the universal ribosomal protein uS2 family.

This is Small ribosomal subunit protein uS2 from Anaeromyxobacter sp. (strain Fw109-5).